Here is a 520-residue protein sequence, read N- to C-terminus: MVTSSFPISVAVFALITLQVGTQDSFIAAVYEHAVILPNKTETPVSQEDALNLMNENIDILETAIKQAAEQGARIIVTPEDALYGWKFTRETVFPYLEDIPDPQVNWIPCQDPHRFGHTPVQARLSCLAKDNSIYVLANLGDKKPCNSRDSTCPPNGYFQYNTNVVYNTEGKLVARYHKYHLYSEPQFNVPEKPELVTFNTAFGRFGIFTCFDIFFYDPGVTLVKDFHVDTILFPTAWMNVLPLLTAIEFHSAWAMGMGVNLLVANTHHVSLNMTGSGIYAPNGPKVYHYDMKTELGKLLLSEVDSHPLSSLAYPTAVNWNAYATTIKPFPVQKNTFRGFISRDGFNFTELFENAGNLTVCQKELCCHLSYRMLQKEENEVYVLGAFTGLHGRRRREYWQVCTLLKCKTTNLTTCGRPVETASTRFEMFSLSGTFGTEYVFPEVLLTEIHLSPGKFEVLKDGRLVNKNGSSGPILTVSLFGRWYTKDSLYSSCGTSNSAITYLLIFILLMIIALQNIVML.

A signal peptide spans 1-22; the sequence is MVTSSFPISVAVFALITLQVGT. The CN hydrolase domain maps to 31–306; it reads YEHAVILPNK…GKLLLSEVDS (276 aa). N-linked (GlcNAc...) asparagine glycosylation occurs at asparagine 39. The Proton acceptor role is filled by glutamate 80. The Proton donor role is filled by lysine 179. Cysteine 211 acts as the Nucleophile in catalysis. N-linked (GlcNAc...) asparagine glycans are attached at residues asparagine 273, asparagine 347, asparagine 357, asparagine 411, and asparagine 468. The GPI-anchor amidated cysteine moiety is linked to residue cysteine 493. A propeptide spans 494 to 520 (removed in mature form); it reads GTSNSAITYLLIFILLMIIALQNIVML.

The protein belongs to the carbon-nitrogen hydrolase superfamily. BTD/VNN family. In terms of tissue distribution, widely expressed with higher expression in spleen and blood.

The protein localises to the cell membrane. It carries out the reaction (R)-pantetheine + H2O = cysteamine + (R)-pantothenate. Amidohydrolase that hydrolyzes specifically one of the carboamide linkages in D-pantetheine thus recycling pantothenic acid (vitamin B5) and releasing cysteamine. Involved in the thymus homing of bone marrow cells. May regulate beta-2 integrin-mediated cell adhesion, migration and motility of neutrophil. This Homo sapiens (Human) protein is Pantetheine hydrolase VNN2.